Consider the following 206-residue polypeptide: Shieldin complex subunit 1 (206 aa).

Composition is skewed to polar residues over residues 1 to 15 (MATQ…TEES), 33 to 43 (RPSQQTNSEAF), and 60 to 69 (DSSNLNTEQN). Disordered regions lie at residues 1-21 (MATQ…LDLP) and 33-69 (RPSQ…TEQN).

In terms of assembly, component of the shieldin complex, consisting of SHLD1, SHLD2, SHLD3 and MAD2L2/REV7. Within the complex, SHLD2 forms a scaffold which interacts with a SHLD3-MAD2L2 subcomplex via its N-terminus, and with SHLD1 via its C-terminus. Interacts with ASTE1.

The protein resides in the chromosome. Its function is as follows. Component of the shieldin complex, which plays an important role in repair of DNA double-stranded breaks (DSBs). During G1 and S phase of the cell cycle, the complex functions downstream of TP53BP1 to promote non-homologous end joining (NHEJ) and suppress DNA end resection. Mediates various NHEJ-dependent processes including immunoglobulin class-switch recombination, and fusion of unprotected telomeres. The sequence is that of Shieldin complex subunit 1 from Bos taurus (Bovine).